Consider the following 640-residue polypeptide: MREEDLDWEEIGLRVGLEIHRQLDTSRKLFCRCTPELVEEVPKEPKVRRKLRPVQSEMGEFDPAALEEFKRDRTFYYLADGSFSCLVELDEEPPHEPCSEALDVAIKVTLLLGGSVVDEVHVMRKMVIDGSNTTGFQRTMLVGFGGEVPTSEGPVRISTVCLEEDAARKVKGRDQDLEVDYCLDRLGIPLIEVSTEPDIRTPEQAREAAERIGEAIKAVGGVKSGIGTVRQDVNVSIEGGAVQEIKGVQDLNLIPKVVKYEALRQANLLRIRDELRERGVSETDLIDCEPMDVTDVFEDTDSEVIRRELERGGVVYALLLPGFEGILGWELCPGRRFGTELADYARRRGVSGLFHSDELPKYGISEEEVEAVRQRLGAEDGDGFVLIAGPEDRVKSAMEAVKDRAIMALKGVPAETRRARKDGTTEYMRPRPGAARMYPETDIPPVVIDEDRVKELAEELPEKPWERKERLAEEYGLGEELVEQMFEHGVVDEFEEIVEETGVEPKVAAATLVNTIPRLEKDGYPVDNLTIDHVKEVLRLYAEGAIAKSGIEELLGALAADPDSDPEELAEELGIVMASEEEIEEVVEEAIRRYEDKIRERGMAVMGKIMGEVMEVLRGRADGKRVSELVRERIREISGE.

It belongs to the GatB/GatE family. GatE subfamily. Heterodimer of GatD and GatE.

It carries out the reaction L-glutamyl-tRNA(Gln) + L-glutamine + ATP + H2O = L-glutaminyl-tRNA(Gln) + L-glutamate + ADP + phosphate + H(+). Functionally, allows the formation of correctly charged Gln-tRNA(Gln) through the transamidation of misacylated Glu-tRNA(Gln) in organisms which lack glutaminyl-tRNA synthetase. The reaction takes place in the presence of glutamine and ATP through an activated gamma-phospho-Glu-tRNA(Gln). The GatDE system is specific for glutamate and does not act on aspartate. This is Glutamyl-tRNA(Gln) amidotransferase subunit E from Methanopyrus kandleri (strain AV19 / DSM 6324 / JCM 9639 / NBRC 100938).